Here is a 193-residue protein sequence, read N- to C-terminus: Epididymal-specific lipocalin-12 (193 aa).

A signal peptide spans 1–19; sequence MGPWWALWLILTLPQILES. A disulfide bond links cysteine 88 and cysteine 193. N-linked (GlcNAc...) asparagine glycosylation is found at asparagine 143 and asparagine 172.

This sequence belongs to the calycin superfamily. Lipocalin family. Monomer. In terms of tissue distribution, expressed in epididymis.

It is found in the secreted. Its function is as follows. Binds all-trans retinoic acid and may act as a retinoid carrier protein within the epididymis. May play a role in male fertility. This Mus musculus (Mouse) protein is Epididymal-specific lipocalin-12 (Lcn12).